Reading from the N-terminus, the 179-residue chain is Large ribosomal subunit protein uL5 (179 aa).

This sequence belongs to the universal ribosomal protein uL5 family. Part of the 50S ribosomal subunit; part of the 5S rRNA/L5/L18/L25 subcomplex. Contacts the 5S rRNA and the P site tRNA. Forms a bridge to the 30S subunit in the 70S ribosome.

Functionally, this is one of the proteins that bind and probably mediate the attachment of the 5S RNA into the large ribosomal subunit, where it forms part of the central protuberance. In the 70S ribosome it contacts protein S13 of the 30S subunit (bridge B1b), connecting the 2 subunits; this bridge is implicated in subunit movement. Contacts the P site tRNA; the 5S rRNA and some of its associated proteins might help stabilize positioning of ribosome-bound tRNAs. In Nitrosospira multiformis (strain ATCC 25196 / NCIMB 11849 / C 71), this protein is Large ribosomal subunit protein uL5.